An 887-amino-acid polypeptide reads, in one-letter code: Inter-alpha-trypsin inhibitor heavy chain H3 (887 aa).

The N-terminal stretch at 1-21 is a signal peptide; that stretch reads MVTLWWPCLVLALLSGLETSG. A propeptide spanning residues 22-33 is cleaved from the precursor; sequence FPRSPLRLLGKR. In terms of domain architecture, VIT spans 29 to 158; that stretch reads LLGKRSLPEG…KVIFELTYEE (130 aa). Asn-91 carries N-linked (GlcNAc...) asparagine glycosylation. The 161-residue stretch at 282 to 442 folds into the VWFA domain; it reads PKNIAFVIDV…YNFLESLALE (161 aa). Asn-580 is a glycosylation site (N-linked (GlcNAc...) asparagine). Asp-647 is subject to Aspartate 1-(chondroitin 4-sulfate)-ester. Positions 648–887 are excised as a propeptide; the sequence is PHFIIQVPGK…HTDYIVPSLF (240 aa).

It belongs to the ITIH family. As to quaternary structure, I-alpha-I plasma protease inhibitors are assembled from one or two heavy chains (HC) and one light chain, bikunin. Pre-alpha-inhibitor (P-alpha-I) is composed of ITIH3/HC3 and bikunin. Heavy chains are linked to bikunin via chondroitin 4-sulfate esterified to the alpha-carboxyl of the C-terminal aspartate after propeptide cleavage.

The protein resides in the secreted. In terms of biological role, may act as a carrier of hyaluronan in serum or as a binding protein between hyaluronan and other matrix protein, including those on cell surfaces in tissues to regulate the localization, synthesis and degradation of hyaluronan which are essential to cells undergoing biological processes. This Rattus norvegicus (Rat) protein is Inter-alpha-trypsin inhibitor heavy chain H3 (Itih3).